A 289-amino-acid polypeptide reads, in one-letter code: Probable signal peptidase I (289 aa).

Over 1–53 (MTETTDSVPEPPSDADQLQPKVSICGLDMPAEVSETAAEAAIGVSEPKKRSAL) the chain is Cytoplasmic. The chain crosses the membrane as a helical span at residues 54-74 (WEFAILAVIAIGLYYVMLTFV). The Extracellular portion of the chain corresponds to 75-289 (ARPYLIPSES…VGSVNSQQGQ (215 aa)). Active-site residues include S84 and K162.

It belongs to the peptidase S26 family.

It is found in the cell membrane. The enzyme catalyses Cleavage of hydrophobic, N-terminal signal or leader sequences from secreted and periplasmic proteins.. The protein is Probable signal peptidase I (lepB) of Mycobacterium leprae (strain TN).